Here is a 568-residue protein sequence, read N- to C-terminus: Protein OCTOPUS-like (568 aa).

7 disordered regions span residues 1–27, 78–99, 168–203, 242–276, 360–428, 446–512, and 526–558; these read MNLS…RLST, LFKP…RPGF, EEAE…ELKP, QKQK…PRFS, PGGS…DKKS, DDEE…SKDG, and RSWK…SHGH. Low complexity predominate over residues 82 to 93; it reads SSSGTNNSNGNG. Positions 168–179 are enriched in acidic residues; sequence EEAEIEEDEENG. The span at 180-193 shows a compositional bias: basic and acidic residues; it reads EKDPGEIVEEKSSE. Ser-260 carries the phosphoserine modification. Polar residues predominate over residues 400–423; it reads SVSNSTTTIDSNSMETAENKGNQN. Gly residues predominate over residues 532–546; that stretch reads GGSGGGGGGGGGGGW.

It belongs to the OCTOPUS family. In terms of processing, phosphorylation at Ser-260 amplifies the promotion of protophloem differentiation.

It is found in the cell membrane. The protein resides in the cytoplasm. Functionally, potentiates primary root protophloem differentiation. Regulates roots architecture. The protein is Protein OCTOPUS-like of Arabidopsis thaliana (Mouse-ear cress).